The chain runs to 109 residues: U26-theraphotoxin-Cg1a (109 aa).

Residues 1-18 form the signal peptide; that stretch reads MNTIIPLLLLSLLITVYA. Positions 19-67 are excised as a propeptide; sequence YALEDGNKEEIQDIAESEFEASNEMLQLAHLLEADRAETEEDRNSRQKR. 3 cysteine pairs are disulfide-bonded: cysteine 68/cysteine 83, cysteine 75/cysteine 88, and cysteine 82/cysteine 103.

Belongs to the neurotoxin 14 (magi-1) family. 07 (Jztx-56) subfamily. Expressed by the venom gland.

The protein localises to the secreted. Its function is as follows. Probable ion channel inhibitor. In Chilobrachys guangxiensis (Chinese earth tiger tarantula), this protein is U26-theraphotoxin-Cg1a.